Reading from the N-terminus, the 218-residue chain is Protein N-lysine methyltransferase METTL21A (218 aa).

Residues W47, 73–75 (GAG), D94, W125, and A143 contribute to the S-adenosyl-L-methionine site.

This sequence belongs to the methyltransferase superfamily. METTL21 family. In terms of assembly, interacts with heat shock 70 family members; at least some of these proteins are methylation substrates.

Its subcellular location is the cytoplasm. The enzyme catalyses L-lysyl-[protein] + 3 S-adenosyl-L-methionine = N(6),N(6),N(6)-trimethyl-L-lysyl-[protein] + 3 S-adenosyl-L-homocysteine + 3 H(+). Protein-lysine methyltransferase that selectively trimethylates residues in heat shock protein 70 (HSP70) family members. Contributes to the in vivo trimethylation of Lys residues in HSPA1 and HSPA8. In vitro methylates 'Lys-561' in HSPA1, 'Lys-564' in HSPA2, 'Lys-585' in HSPA5, 'Lys-563' in HSPA6 and 'Lys-561' in HSPA8. This Bos taurus (Bovine) protein is Protein N-lysine methyltransferase METTL21A (METTL21A).